A 535-amino-acid polypeptide reads, in one-letter code: MAKKVAVIGAGVSGLISLKCCVDEGLEPTCFERTEDIGGVWRFKENVEDGRASIYQSVITNTSKEMSCFSDFPMPEDFPNFLHNSKLLEYFRIFAKKFDLLKYIQFQTTVLSVRKCPDFSSSGQWKVVTQSNGKEQSAVFDAVMVCSGHHILPHIPLKSFPGIERFKGQYFHSRQYKHPDGFEGKRILVIGMGNSGSDIAVELSKNAAQVFISTRHGTWVMSRISEDGYPWDSVFHTRFRSMLRNVLPRTAVKWMIEQQMNRWFNHENYGLEPQNKYIMKEPVLNDDVPSRLLCGAIKVKSTVKELTETSAIFEDGTVEENIDVIIFATGYSFSFPFLEDSLVKVENNMVSLYKYIFPAHLDKSTLACIGLIQPLGSIFPTAELQARWVTRVFKGLCSLPSERTMMMDIIKRNEKRIDLFGESQSQTLQTNYVDYLDELALEIGAKPDFCSLLFKDPKLAVRLYFGPCNSYQYRLVGPGQWEGARNAIFTQKQRILKPLKTRALKDSSNFSVSFLLKILGLLAVVVAFFCQLQWS.

Residue alanine 2 is modified to N-acetylalanine. FAD is bound by residues 9–13 (GAGVS), glutamate 32, 40–41 (VW), and 61–62 (NT). NADP(+) is bound by residues 60–61 (TN) and 195–198 (SGSD). Residue lysine 492 forms a Glycyl lysine isopeptide (Lys-Gly) (interchain with G-Cter in SUMO) linkage. Residues 510-530 (FSVSFLLKILGLLAVVVAFFC) form a helical membrane-spanning segment.

The protein belongs to the FMO family. FAD is required as a cofactor. The cofactor is Mg(2+).

It localises to the microsome membrane. The protein resides in the endoplasmic reticulum membrane. Its function is as follows. Catalyzes the oxidative metabolism of numerous xenobiotics, including mainly therapeutic drugs and insecticides that contain a soft nucleophile, most commonly nitrogen and sulfur and participates to their bioactivation. The polypeptide is Dimethylaniline monooxygenase [N-oxide-forming] 2 (Pan troglodytes (Chimpanzee)).